A 549-amino-acid polypeptide reads, in one-letter code: CTP synthase (549 aa).

The segment at 1-267 is amidoligase domain; the sequence is MTKFVFVTGG…AAQVLSLLNL (267 aa). CTP is bound at residue Ser13. A UTP-binding site is contributed by Ser13. Residues 14–19 and Asp71 each bind ATP; that span reads SIGKGI. Mg(2+) is bound by residues Asp71 and Glu141. CTP contacts are provided by residues 148–150, 188–193, and Lys224; these read DIE and KTKPTQ. UTP-binding positions include 188-193 and Lys224; that span reads KTKPTQ. Positions 292-534 constitute a Glutamine amidotransferase type-1 domain; that stretch reads EIAIVGKYVR…VQAARTHSSD (243 aa). Residue Gly354 participates in L-glutamine binding. Catalysis depends on Cys381, which acts as the Nucleophile; for glutamine hydrolysis. L-glutamine-binding positions include 382–385, Glu405, and Arg462; that span reads LGMQ. Residues His507 and Glu509 contribute to the active site.

It belongs to the CTP synthase family. As to quaternary structure, homotetramer.

The catalysed reaction is UTP + L-glutamine + ATP + H2O = CTP + L-glutamate + ADP + phosphate + 2 H(+). The enzyme catalyses L-glutamine + H2O = L-glutamate + NH4(+). It catalyses the reaction UTP + NH4(+) + ATP = CTP + ADP + phosphate + 2 H(+). It participates in pyrimidine metabolism; CTP biosynthesis via de novo pathway; CTP from UDP: step 2/2. Its activity is regulated as follows. Allosterically activated by GTP, when glutamine is the substrate; GTP has no effect on the reaction when ammonia is the substrate. The allosteric effector GTP functions by stabilizing the protein conformation that binds the tetrahedral intermediate(s) formed during glutamine hydrolysis. Inhibited by the product CTP, via allosteric rather than competitive inhibition. Functionally, catalyzes the ATP-dependent amination of UTP to CTP with either L-glutamine or ammonia as the source of nitrogen. Regulates intracellular CTP levels through interactions with the four ribonucleotide triphosphates. In Cyanothece sp. (strain PCC 7425 / ATCC 29141), this protein is CTP synthase.